The sequence spans 165 residues: Phosphopantetheine adenylyltransferase (165 aa).

Thr9 contributes to the substrate binding site. ATP contacts are provided by residues 9–10 (TF) and His17. Substrate is bound by residues Lys41, Leu73, and Arg87. ATP-binding positions include 88-90 (GLR), Glu98, and 123-129 (YQFISGT).

It belongs to the bacterial CoaD family. In terms of assembly, homohexamer. Mg(2+) is required as a cofactor.

The protein localises to the cytoplasm. The enzyme catalyses (R)-4'-phosphopantetheine + ATP + H(+) = 3'-dephospho-CoA + diphosphate. The protein operates within cofactor biosynthesis; coenzyme A biosynthesis; CoA from (R)-pantothenate: step 4/5. Reversibly transfers an adenylyl group from ATP to 4'-phosphopantetheine, yielding dephospho-CoA (dPCoA) and pyrophosphate. The sequence is that of Phosphopantetheine adenylyltransferase from Burkholderia lata (strain ATCC 17760 / DSM 23089 / LMG 22485 / NCIMB 9086 / R18194 / 383).